Here is a 161-residue protein sequence, read N- to C-terminus: Non-secretory ribonuclease (161 aa).

Residues 1-27 form the signal peptide; the sequence is MVPKLFTSQICLLLLLGLMGVEGSLHA. Tryptophan 34 carries a C-linked (Man) tryptophan glycan. The active-site Proton acceptor is the histidine 42. N-linked (GlcNAc...) asparagine glycosylation occurs at asparagine 44. Intrachain disulfides connect cysteine 50–cysteine 110, cysteine 64–cysteine 123, cysteine 82–cysteine 138, and cysteine 89–cysteine 98. Tyrosine 60 carries the post-translational modification 3'-nitrotyrosine. 65–69 contributes to the substrate binding site; sequence KNQNT. 4 N-linked (GlcNAc...) asparagine glycosylation sites follow: asparagine 86, asparagine 92, asparagine 111, and asparagine 119. Histidine 156 acts as the Proton donor in catalysis.

Belongs to the pancreatic ribonuclease family. In terms of assembly, interacts with and forms a tight 1:1 complex with RNH1. Dimerization of two such complexes may occur.

The protein resides in the lysosome. Its subcellular location is the cytoplasmic granule. The enzyme catalyses an [RNA] containing cytidine + H2O = an [RNA]-3'-cytidine-3'-phosphate + a 5'-hydroxy-ribonucleotide-3'-[RNA].. The catalysed reaction is an [RNA] containing uridine + H2O = an [RNA]-3'-uridine-3'-phosphate + a 5'-hydroxy-ribonucleotide-3'-[RNA].. Functionally, this is a non-secretory ribonuclease. It is a pyrimidine specific nuclease with a slight preference for U. Cytotoxin and helminthotoxin. Possesses a wide variety of biological activities. This is Non-secretory ribonuclease (RNASE2) from Nomascus leucogenys (Northern white-cheeked gibbon).